The following is a 276-amino-acid chain: Ribonuclease T2 (276 aa).

Residues 1-17 form the signal peptide; it reads MGMLALGAMQLAAGAVF. 5 disulfides stabilise this stretch: cysteine 22-cysteine 41, cysteine 30-cysteine 77, cysteine 40-cysteine 143, cysteine 85-cysteine 135, and cysteine 208-cysteine 242. A glycan (N-linked (GlcNAc...) asparagine) is linked at asparagine 32. Residue histidine 70 is part of the active site. Asparagine 93 is a glycosylation site (N-linked (GlcNAc...) asparagine). Catalysis depends on residues glutamate 128 and histidine 132. N-linked (GlcNAc...) asparagine glycosylation occurs at asparagine 256.

The protein belongs to the RNase T2 family.

It carries out the reaction a ribonucleotidyl-ribonucleotide-RNA + H2O = a 3'-end 3'-phospho-ribonucleotide-RNA + a 5'-end dephospho-ribonucleoside-RNA + H(+). This chain is Ribonuclease T2 (rntB), found in Aspergillus oryzae (strain ATCC 42149 / RIB 40) (Yellow koji mold).